A 710-amino-acid chain; its full sequence is Solute carrier organic anion transporter family member 3A1 (710 aa).

Residue M1 is modified to N-acetylmethionine. The span at 1–15 shows a compositional bias: gly residues; sequence MQGKKPGGSSGGGRS. The interval 1 to 25 is disordered; the sequence is MQGKKPGGSSGGGRSGELQGDEAQR. The Cytoplasmic portion of the chain corresponds to 1–40; sequence MQGKKPGGSSGGGRSGELQGDEAQRNKKKKKKVSCFSNIK. A helical transmembrane segment spans residues 41–60; it reads IFLVSECALMLAQGTVGAYL. The Extracellular segment spans residues 61–79; sequence VSVLTTLERRFNLQSADVG. Residues 80 to 100 form a helical membrane-spanning segment; that stretch reads VIASSFEIGNLALILFVSYFG. The Cytoplasmic segment spans residues 101–106; sequence ARGHRP. The helical transmembrane segment at 107 to 131 threads the bilayer; the sequence is RLIGCGGIVMALGALLSALPEFLTH. At 132–174 the chain is on the extracellular side; the sequence is QYKYEAGEIRWGAEGRDVCAANGSGGDEGPDPDLICRNRTATN. N153 and N169 each carry an N-linked (GlcNAc...) asparagine glycan. A helical transmembrane segment spans residues 175–203; that stretch reads MMYLLLIGAQVLLGIGATPVQPLGVSYID. Residues 204-222 are Cytoplasmic-facing; the sequence is DHVRRKDSSLYIGILFTML. The helical transmembrane segment at 223–243 threads the bilayer; it reads VFGPACGFILGSFCTKIYVDA. The Extracellular portion of the chain corresponds to 244-261; the sequence is VFIDTSNLDITPDDPRWI. Residues 262 to 286 traverse the membrane as a helical segment; that stretch reads GAWWGGFLLCGALLFFSSLLMFGFP. Residues 287 to 344 are Cytoplasmic-facing; it reads QSLPPHSEPAMESEQAMLSEREYERPKPSNGVLRHPLEPDSSASCFQQLRVIPKVTKH. Residues 345 to 366 traverse the membrane as a helical segment; that stretch reads LLSNPVFTCIILAACMEIAVVA. Residues 367 to 386 lie on the Extracellular side of the membrane; the sequence is GFAAFLGKYLEQQFNLTTSS. N381 carries N-linked (GlcNAc...) asparagine glycosylation. The chain crosses the membrane as a helical span at residues 387 to 410; the sequence is ANQLLGMTAIPCACLGIFLGGLLV. The Cytoplasmic portion of the chain corresponds to 411–414; the sequence is KKLS. Residues 415–438 traverse the membrane as a helical segment; that stretch reads LSALGAIRMAMLVNLVSTACYVSF. Over 439–539 the chain is Extracellular; that stretch reads LFLGCDTGPV…PGCQEAFLTF (101 aa). Residue N457 is glycosylated (N-linked (GlcNAc...) asparagine). Residues 465–513 form the Kazal-like domain; the sequence is LDPYSPCNNNCECQTDSFTPVCGADGITYLSACFAGCNSTNLTGCACLT. 3 disulfide bridges follow: C471/C501, C477/C497, and C486/C511. N-linked (GlcNAc...) asparagine glycosylation is found at N502, N505, and N519. A helical transmembrane segment spans residues 540 to 562; that stretch reads LCVMCICSLIGAMAQTPSVIILI. Topologically, residues 563–571 are cytoplasmic; that stretch reads RTVSPELKS. Residues 572–597 form a helical membrane-spanning segment; sequence YALGVLFLLLRLLGFIPPPLIFGAGI. Topologically, residues 598-630 are extracellular; sequence DSTCLFWSTFCGEQGACVLYDNVVYRYLYVSIA. Residues 631–648 form a helical membrane-spanning segment; sequence IALKSFAFILYTTTWQCL. The Cytoplasmic segment spans residues 649–705; that stretch reads RKNYKRYIKNHEGGLSTSEFFASTLTLDNLGRDPVPANQTHRTKFIYNLEDHEWCEN.

The protein belongs to the organo anion transporter (TC 2.A.60) family. Generally the expression of isoform 1 is higher than that of isoform 2. As to expression, expressed in placental trophoblasts. Expressed in pancreas, kidney, liver, lung, brain, heart, cerebellum, peripheral blood leukocyte, colon, small intestine, ovary, testis, prostate, thyroid, thymus and spleen. Expressed in fetal brain, heart, kidney, liver, lung, skeletal muscle, spleen and pancreas. In testis, detected in spermatogonia at different stages and absent from Sertoli cells. Expressed in the choroid plexus epithelium, at the basolateral membrane. In brain, also very abundant in the gray matter of the frontal cortex, but not associated with neuronal cell bodies. Not detected in the white matter. In terms of tissue distribution, expressed in heart, brain, cerebellum, testis, lung, thyroid, spoleen and liver. In testis, primarily localized to the basal membrane of Sertoli cells and weakly expressed within the tubules. In testis, also present in spermatogonia at different stages. In brain, expressed in the choroid plexus epithelium, at the apical membrane as well as in the subapical intracellular vesicular compartments. In brain, also associated with neuronal bodies and axons in both the gray and the white matters of the frontal cortex.

The protein resides in the basolateral cell membrane. The protein localises to the apical cell membrane. It is found in the basal cell membrane. The catalysed reaction is L-thyroxine(out) = L-thyroxine(in). The enzyme catalyses prostaglandin E1(out) = prostaglandin E1(in). It catalyses the reaction prostaglandin E2(out) = prostaglandin E2(in). It carries out the reaction prostaglandin F2alpha(out) = prostaglandin F2alpha(in). The catalysed reaction is (5Z,8Z,11Z,14Z)-eicosatetraenoate(out) = (5Z,8Z,11Z,14Z)-eicosatetraenoate(in). The enzyme catalyses taurocholate(out) = taurocholate(in). It catalyses the reaction glycocholate(out) = glycocholate(in). It carries out the reaction estrone 3-sulfate(out) = estrone 3-sulfate(in). The catalysed reaction is argipressin(out) = argipressin(in). Its activity is regulated as follows. Stimulated by extracellular acidic pH. Functionally, putative organic anion antiporter with apparent broad substrate specificity. Recognizes various substrates including thyroid hormone L-thyroxine, prostanoids such as prostaglandin E1 and E2, bile acids such as taurocholate, glycolate and glycochenodeoxycholate and peptide hormones such as L-arginine vasopressin, likely operating in a tissue-specific manner. The transport mechanism, its electrogenicity and potential tissue-specific counterions remain to be elucidated. This is Solute carrier organic anion transporter family member 3A1 (SLCO3A1) from Homo sapiens (Human).